Consider the following 842-residue polypeptide: Leucine--tRNA ligase (842 aa).

A 'HIGH' region motif is present at residues Pro-62 to His-72. The segment at Gly-390–Asp-414 is disordered. Positions Ala-607–Ser-611 match the 'KMSKS' region motif. Residue Lys-610 participates in ATP binding.

The protein belongs to the class-I aminoacyl-tRNA synthetase family.

Its subcellular location is the cytoplasm. The catalysed reaction is tRNA(Leu) + L-leucine + ATP = L-leucyl-tRNA(Leu) + AMP + diphosphate. The protein is Leucine--tRNA ligase of Paenarthrobacter aurescens (strain TC1).